The following is a 67-amino-acid chain: Protein AaeX (67 aa).

Transmembrane regions (helical) follow at residues 3 to 23 (LFPV…ELLL) and 43 to 63 (FVWH…YLIS).

This sequence belongs to the AaeX family.

It localises to the cell membrane. This is Protein AaeX from Salmonella agona (strain SL483).